The sequence spans 237 residues: Probable septum site-determining protein MinC (237 aa).

This sequence belongs to the MinC family. As to quaternary structure, interacts with MinD and FtsZ.

Cell division inhibitor that blocks the formation of polar Z ring septums. Rapidly oscillates between the poles of the cell to destabilize FtsZ filaments that have formed before they mature into polar Z rings. Prevents FtsZ polymerization. The sequence is that of Probable septum site-determining protein MinC from Buchnera aphidicola subsp. Acyrthosiphon pisum (strain 5A).